Reading from the N-terminus, the 129-residue chain is Small ribosomal subunit protein uS11 (129 aa).

Belongs to the universal ribosomal protein uS11 family. Part of the 30S ribosomal subunit. Interacts with proteins S7 and S18. Binds to IF-3.

Located on the platform of the 30S subunit, it bridges several disparate RNA helices of the 16S rRNA. Forms part of the Shine-Dalgarno cleft in the 70S ribosome. The polypeptide is Small ribosomal subunit protein uS11 (Jannaschia sp. (strain CCS1)).